The primary structure comprises 352 residues: Outer membrane protein assembly factor BamC (352 aa).

A signal peptide spans 1 to 19; the sequence is MQYWIPKALAVSVLVSLSG. A lipid anchor (N-palmitoyl cysteine) is attached at Cys20. The S-diacylglycerol cysteine moiety is linked to residue Cys20.

This sequence belongs to the BamC family. As to quaternary structure, part of the Bam complex.

It localises to the cell outer membrane. Part of the outer membrane protein assembly complex, which is involved in assembly and insertion of beta-barrel proteins into the outer membrane. The sequence is that of Outer membrane protein assembly factor BamC from Pseudoalteromonas sp. (strain SM9913).